Consider the following 1075-residue polypeptide: DNA-directed RNA polymerase subunit beta (1075 aa).

It belongs to the RNA polymerase beta chain family. In plastids the minimal PEP RNA polymerase catalytic core is composed of four subunits: alpha, beta, beta', and beta''. When a (nuclear-encoded) sigma factor is associated with the core the holoenzyme is formed, which can initiate transcription.

The protein resides in the plastid. The protein localises to the chloroplast. It catalyses the reaction RNA(n) + a ribonucleoside 5'-triphosphate = RNA(n+1) + diphosphate. DNA-dependent RNA polymerase catalyzes the transcription of DNA into RNA using the four ribonucleoside triphosphates as substrates. The chain is DNA-directed RNA polymerase subunit beta from Oryza sativa (Rice).